The sequence spans 457 residues: Adenylosuccinate synthetase isozyme 2 (457 aa).

GTP-binding positions include 40 to 46 (GDEGKGK) and 68 to 70 (GHT). Aspartate 41 (proton acceptor) is an active-site residue. Mg(2+)-binding residues include aspartate 41 and glycine 68. Aspartate 41 is a binding site for substrate. Residues 41-44 (DEGK), 66-69 (NAGH), threonine 163, arginine 177, asparagine 256, threonine 271, and arginine 335 contribute to the IMP site. Histidine 69 acts as the Proton donor in catalysis. 331–337 (VTTGRKR) contacts substrate. Residues arginine 337, 363–365 (KLD), and 445–448 (GVGK) each bind GTP.

It belongs to the adenylosuccinate synthetase family. Homodimer. Mg(2+) serves as cofactor.

Its subcellular location is the cytoplasm. It localises to the mitochondrion. The catalysed reaction is IMP + L-aspartate + GTP = N(6)-(1,2-dicarboxyethyl)-AMP + GDP + phosphate + 2 H(+). The protein operates within purine metabolism; AMP biosynthesis via de novo pathway; AMP from IMP: step 1/2. With respect to regulation, inhibited competitively by AMP and IMP and non-competitively by fructose 1,6-bisphosphate. Functionally, plays an important role in the de novo pathway and in the salvage pathway of purine nucleotide biosynthesis. Catalyzes the first committed step in the biosynthesis of AMP from IMP. The chain is Adenylosuccinate synthetase isozyme 2 (adss2) from Xenopus laevis (African clawed frog).